A 187-amino-acid polypeptide reads, in one-letter code: Large ribosomal subunit protein bL17 (187 aa).

Residues proline 122 to lysine 187 are disordered. The span at serine 127 to alanine 144 shows a compositional bias: low complexity. Composition is skewed to acidic residues over residues proline 145–aspartate 157 and threonine 165–aspartate 180.

It belongs to the bacterial ribosomal protein bL17 family. Part of the 50S ribosomal subunit. Contacts protein L32.

This Clavibacter michiganensis subsp. michiganensis (strain NCPPB 382) protein is Large ribosomal subunit protein bL17.